The following is a 715-amino-acid chain: Fatty acid oxidation complex subunit alpha (715 aa).

The tract at residues 1 to 194 (MHEQRAKPSA…RLGLVDDAVP (194 aa)) is enoyl-CoA hydratase. The tract at residues 310–715 (HALHRIGILG…QGERFYPQGS (406 aa)) is 3-hydroxyacyl-CoA dehydrogenase.

The protein in the N-terminal section; belongs to the enoyl-CoA hydratase/isomerase family. In the central section; belongs to the 3-hydroxyacyl-CoA dehydrogenase family. Heterotetramer of two alpha chains (FadJ) and two beta chains (FadI).

It is found in the cytoplasm. It catalyses the reaction a (3S)-3-hydroxyacyl-CoA = a (2E)-enoyl-CoA + H2O. It carries out the reaction a 4-saturated-(3S)-3-hydroxyacyl-CoA = a (3E)-enoyl-CoA + H2O. The catalysed reaction is a (3S)-3-hydroxyacyl-CoA + NAD(+) = a 3-oxoacyl-CoA + NADH + H(+). The enzyme catalyses (3S)-3-hydroxybutanoyl-CoA = (3R)-3-hydroxybutanoyl-CoA. The protein operates within lipid metabolism; fatty acid beta-oxidation. In terms of biological role, catalyzes the formation of a hydroxyacyl-CoA by addition of water on enoyl-CoA. Also exhibits 3-hydroxyacyl-CoA epimerase and 3-hydroxyacyl-CoA dehydrogenase activities. The protein is Fatty acid oxidation complex subunit alpha of Serratia proteamaculans (strain 568).